A 186-amino-acid chain; its full sequence is MLHFIKSASNSQSWYNHDKVEICFIGRSNVGKSSLINSLSNSAVSKVSNTPGRTQLINFFEDDQKNVYVDLPGYGFAQMPKDKLEKMHQMIDEYLQNRKNLKTIVLLFDSRRGILDQDLDFINWAQQAKKNIILLATKIDKLNQAQKHKLLVSLKELNLEKSVLLVSSLKRTNIDNLKKLLASEFK.

The region spanning Asp-18 to Lys-186 is the EngB-type G domain. Residues Gly-26–Ser-33, Gly-52–Leu-56, Asp-70–Gly-73, Thr-137–Asp-140, and Val-166–Ser-168 contribute to the GTP site. The Mg(2+) site is built by Ser-33 and Thr-54.

This sequence belongs to the TRAFAC class TrmE-Era-EngA-EngB-Septin-like GTPase superfamily. EngB GTPase family. Mg(2+) serves as cofactor.

Necessary for normal cell division and for the maintenance of normal septation. This Mycoplasmopsis pulmonis (strain UAB CTIP) (Mycoplasma pulmonis) protein is Probable GTP-binding protein EngB.